A 348-amino-acid chain; its full sequence is D-erythrose-4-phosphate dehydrogenase (348 aa).

NAD(+) is bound by residues 12-13 (RI) and Arg-81. Substrate-binding positions include 154–156 (SCT), Arg-200, 213–214 (TK), and Arg-236. Cys-155 serves as the catalytic Nucleophile. An NAD(+)-binding site is contributed by Asn-318.

This sequence belongs to the glyceraldehyde-3-phosphate dehydrogenase family. Epd subfamily. As to quaternary structure, homotetramer.

The protein localises to the cytoplasm. The enzyme catalyses D-erythrose 4-phosphate + NAD(+) + H2O = 4-phospho-D-erythronate + NADH + 2 H(+). It participates in cofactor biosynthesis; pyridoxine 5'-phosphate biosynthesis; pyridoxine 5'-phosphate from D-erythrose 4-phosphate: step 1/5. In terms of biological role, catalyzes the NAD-dependent conversion of D-erythrose 4-phosphate to 4-phosphoerythronate. The polypeptide is D-erythrose-4-phosphate dehydrogenase (Salmonella agona (strain SL483)).